The primary structure comprises 401 residues: Riboflavin biosynthesis protein RibBA (401 aa).

A DHBP synthase region spans residues 1 to 203 (MTDFQFSKVE…IQQLQEYRRK (203 aa)). Residues 30 to 31 (RE), D35, 142 to 146 (RNGHT), and E166 each bind D-ribulose 5-phosphate. Mg(2+) is bound at residue E31. H145 serves as a coordination point for Mg(2+). The interval 204–401 (HDSLVKQISV…QIKMGHMFNF (198 aa)) is GTP cyclohydrolase II. 254 to 258 (RIHSE) contributes to the GTP binding site. Residues C259, C270, and C272 each contribute to the Zn(2+) site. Residues Q275, 297–299 (EGR), and T319 each bind GTP. D331 functions as the Proton acceptor; for GTP cyclohydrolase activity in the catalytic mechanism. Catalysis depends on R333, which acts as the Nucleophile; for GTP cyclohydrolase activity. GTP-binding residues include T354 and K359.

This sequence in the N-terminal section; belongs to the DHBP synthase family. It in the C-terminal section; belongs to the GTP cyclohydrolase II family. Mg(2+) serves as cofactor. Requires Mn(2+) as cofactor. The cofactor is Zn(2+).

It catalyses the reaction D-ribulose 5-phosphate = (2S)-2-hydroxy-3-oxobutyl phosphate + formate + H(+). The enzyme catalyses GTP + 4 H2O = 2,5-diamino-6-hydroxy-4-(5-phosphoribosylamino)-pyrimidine + formate + 2 phosphate + 3 H(+). The protein operates within cofactor biosynthesis; riboflavin biosynthesis; 2-hydroxy-3-oxobutyl phosphate from D-ribulose 5-phosphate: step 1/1. It participates in cofactor biosynthesis; riboflavin biosynthesis; 5-amino-6-(D-ribitylamino)uracil from GTP: step 1/4. Catalyzes the conversion of D-ribulose 5-phosphate to formate and 3,4-dihydroxy-2-butanone 4-phosphate. Its function is as follows. Catalyzes the conversion of GTP to 2,5-diamino-6-ribosylamino-4(3H)-pyrimidinone 5'-phosphate (DARP), formate and pyrophosphate. The protein is Riboflavin biosynthesis protein RibBA of Actinobacillus pleuropneumoniae serotype 3 (strain JL03).